Here is a 333-residue protein sequence, read N- to C-terminus: Mitochondrial fission regulator 1 (333 aa).

Residues 1–48 constitute a mitochondrion transit peptide; it reads MLGWIKRLIRMVFQQVGVSMQSVLWSRKPYGSSRSIVRKIGTNLSLIQ. Ser-119 carries the post-translational modification Phosphoserine. A coiled-coil region spans residues 137–169; sequence NEEALQKICALENELAALRAQIAKIVTQQEQQN. 2 disordered regions span residues 177 to 198 and 288 to 315; these read STTFGTIPPHPPPPPPPLPPPA and SDSQDEVEKGIPKSESEATSERVLFGPH. The tract at residues 179–304 is necessary and sufficient to promote mitochondrial fission; it reads TFGTIPPHPP…EKGIPKSESE (126 aa). Pro residues predominate over residues 184 to 198; the sequence is PPHPPPPPPPLPPPA. Residues 288-307 show a composition bias toward basic and acidic residues; sequence SDSQDEVEKGIPKSESEATS.

This sequence belongs to the MTFR1 family.

The protein localises to the mitochondrion. May play a role in mitochondrial aerobic respiration. May also regulate mitochondrial organization and fission. The sequence is that of Mitochondrial fission regulator 1 (MTFR1) from Homo sapiens (Human).